The chain runs to 137 residues: Large ribosomal subunit protein uL16 (137 aa).

Belongs to the universal ribosomal protein uL16 family. As to quaternary structure, part of the 50S ribosomal subunit.

Binds 23S rRNA and is also seen to make contacts with the A and possibly P site tRNAs. The protein is Large ribosomal subunit protein uL16 of Rhizobium meliloti (strain 1021) (Ensifer meliloti).